We begin with the raw amino-acid sequence, 605 residues long: Putative glutaminase 2 (605 aa).

Positions 213, 262, 308, 315, 342, 394, and 412 each coordinate substrate. ANK repeat units follow at residues 480–509 (DRLIPVFHVARAGDLPTMRRLYMQGEDLNT) and 513–543 (DDRTVLHIAATEGYETMIKFLVNVAKVDVDK). Basic and acidic residues predominate over residues 569-581 (KAMKRPEQHRKDS). Residues 569 to 605 (KAMKRPEQHRKDSVSSLDTDDEIDDDGFPEKPSFTID) are disordered. Over residues 586–595 (DTDDEIDDDG) the composition is skewed to acidic residues.

This sequence belongs to the glutaminase family.

It catalyses the reaction L-glutamine + H2O = L-glutamate + NH4(+). In Caenorhabditis elegans, this protein is Putative glutaminase 2 (glna-2).